Consider the following 771-residue polypeptide: UPF0313 protein PSPTO_4928 (771 aa).

One can recognise a Radical SAM core domain in the interval 371–649 (AYDMIRFSVN…KAFLRYHDPK (279 aa)). [4Fe-4S] cluster is bound by residues C385, C389, and C392. A disordered region spans residues 683-771 (DTYQSARRKN…KPARKPVVPR (89 aa)). Basic and acidic residues-rich tracts occupy residues 726-735 (KPWDKREEAK) and 745-754 (AAKERMDAAK). The span at 756–765 (GKGKGGKPAR) shows a compositional bias: basic residues.

It belongs to the UPF0313 family. The cofactor is [4Fe-4S] cluster.

This Pseudomonas syringae pv. tomato (strain ATCC BAA-871 / DC3000) protein is UPF0313 protein PSPTO_4928.